A 358-amino-acid chain; its full sequence is sn-glycerol-3-phosphate import ATP-binding protein UgpC (358 aa).

The 232-residue stretch at 4–235 (VELKQVRKTY…PATLFVASFI (232 aa)) folds into the ABC transporter domain. 37–44 (GPSGCGKS) contacts ATP.

This sequence belongs to the ABC transporter superfamily. sn-glycerol-3-phosphate importer (TC 3.A.1.1.3) family. As to quaternary structure, the complex is composed of two ATP-binding proteins (UgpC), two transmembrane proteins (UgpA and UgpE) and a solute-binding protein (UgpB).

The protein resides in the cell inner membrane. The catalysed reaction is sn-glycerol 3-phosphate(out) + ATP + H2O = sn-glycerol 3-phosphate(in) + ADP + phosphate + H(+). In terms of biological role, part of the ABC transporter complex UgpBAEC involved in sn-glycerol-3-phosphate (G3P) import. Responsible for energy coupling to the transport system. In Roseobacter denitrificans (strain ATCC 33942 / OCh 114) (Erythrobacter sp. (strain OCh 114)), this protein is sn-glycerol-3-phosphate import ATP-binding protein UgpC.